Here is a 777-residue protein sequence, read N- to C-terminus: Endonuclease MutS2 (777 aa).

Residue 328–335 coordinates ATP; it reads GPNTGGKT. In terms of domain architecture, Smr spans 702–777; that stretch reads LDLRGKRYEE…GSGATIVIFK (76 aa).

This sequence belongs to the DNA mismatch repair MutS family. MutS2 subfamily. In terms of assembly, homodimer. Binds to stalled ribosomes, contacting rRNA.

Endonuclease that is involved in the suppression of homologous recombination and thus may have a key role in the control of bacterial genetic diversity. In terms of biological role, acts as a ribosome collision sensor, splitting the ribosome into its 2 subunits. Detects stalled/collided 70S ribosomes which it binds and splits by an ATP-hydrolysis driven conformational change. Acts upstream of the ribosome quality control system (RQC), a ribosome-associated complex that mediates the extraction of incompletely synthesized nascent chains from stalled ribosomes and their subsequent degradation. Probably generates substrates for RQC. The chain is Endonuclease MutS2 from Streptococcus sanguinis (strain SK36).